A 128-amino-acid polypeptide reads, in one-letter code: Large ribosomal subunit protein bL12 (128 aa).

This sequence belongs to the bacterial ribosomal protein bL12 family. In terms of assembly, homodimer. Part of the ribosomal stalk of the 50S ribosomal subunit. Forms a multimeric L10(L12)X complex, where L10 forms an elongated spine to which 2 to 4 L12 dimers bind in a sequential fashion. Binds GTP-bound translation factors.

Forms part of the ribosomal stalk which helps the ribosome interact with GTP-bound translation factors. Is thus essential for accurate translation. The chain is Large ribosomal subunit protein bL12 from Corynebacterium jeikeium (strain K411).